A 416-amino-acid chain; its full sequence is Phosphoglycerate kinase (416 aa).

Substrate contacts are provided by residues 28–30 (DMN), arginine 44, 65–68 (HQSR), arginine 122, and arginine 162. Residues glutamate 337 and 362 to 365 (GGHI) each bind ATP.

This sequence belongs to the phosphoglycerate kinase family. Monomer.

It localises to the cytoplasm. The catalysed reaction is (2R)-3-phosphoglycerate + ATP = (2R)-3-phospho-glyceroyl phosphate + ADP. The protein operates within carbohydrate degradation; glycolysis; pyruvate from D-glyceraldehyde 3-phosphate: step 2/5. This chain is Phosphoglycerate kinase, found in Methanosarcina mazei (strain ATCC BAA-159 / DSM 3647 / Goe1 / Go1 / JCM 11833 / OCM 88) (Methanosarcina frisia).